The following is a 447-amino-acid chain: Putative vacuolar cation/proton exchanger 4 (447 aa).

A disordered region spans residues 1 to 29 (MDKSEMDKINGTNPESTDQAPSLASRPDE). At 1-65 (MDKSEMDKIN…VNWGVFGSMK (65 aa)) the chain is on the cytoplasmic side. The span at 10 to 22 (NGTNPESTDQAPS) shows a compositional bias: polar residues. A helical transmembrane segment spans residues 66 to 86 (IVFLKSKLNVLIPCGFLAIFL). Residues 87–93 (NYMTQRY) lie on the Extracellular side of the membrane. A helical membrane pass occupies residues 94–114 (GWVFPLSMLGIIPLAERLGFA). The Cytoplasmic portion of the chain corresponds to 115–122 (TDWQISCE). A helical transmembrane segment spans residues 123 to 143 (VGRLLNSAFGNATELIISIHA). Residues 132 to 167 (GNATELIISIHALSRGKLHVVQQCLLGSILSNLLLV) are cation selection. At 144 to 159 (LSRGKLHVVQQCLLGS) the chain is on the extracellular side. The helical transmembrane segment at 160-180 (ILSNLLLVLGSAFFSGGLACG) threads the bilayer. Residues 181-190 (KTMQTFSKAD) lie on the Cytoplasmic side of the membrane. The helical transmembrane segment at 191 to 211 (AVVNSGLLLMAVMGLLIPAAL) threads the bilayer. The Extracellular portion of the chain corresponds to 212 to 224 (HYTHSEAQFGKSE). The chain crosses the membrane as a helical span at residues 225–245 (LALSRFSSCIMLVAYASYLYF). The Cytoplasmic portion of the chain corresponds to 246 to 286 (QLSNNRRRNEANVYPCMPLIKRRIQDDVDGNDDEVPEISKR). The chain crosses the membrane as a helical span at residues 287 to 307 (EAISWIAIFIAWISMLSYYLV). Residues 308-318 (DAIDGASKAWN) lie on the Extracellular side of the membrane. Residues 319-339 (IPVAFISVVLLPVVGNSAGHA) traverse the membrane as a helical segment. The cation selection stretch occupies residues 333–368 (GNSAGHANAVMFAVKDKLDISLGVAIGSSIQISMFG). Topologically, residues 340–353 (NAVMFAVKDKLDIS) are cytoplasmic. The chain crosses the membrane as a helical span at residues 354–374 (LGVAIGSSIQISMFGIPFCVV). Over 375–384 (MGWMMGKPMD) the chain is Extracellular. A helical membrane pass occupies residues 385–405 (LNFHLFETASLLTTVLVVAFL). Residues 406 to 413 (LQDGTSNC) are Cytoplasmic-facing. The chain crosses the membrane as a helical span at residues 414-434 (VKGLMLFLCYLIVAASFYVHA). The Extracellular portion of the chain corresponds to 435–447 (DPNSKASEKPPQN).

It belongs to the Ca(2+):cation antiporter (CaCA) (TC 2.A.19) family. Cation/proton exchanger (CAX) subfamily.

It is found in the vacuole membrane. Functionally, vacuolar cation/proton exchanger (CAX). Translocates Ca(2+) and other metal ions into vacuoles using the proton gradient formed by H(+)-ATPase and H(+)-pyrophosphatase. This chain is Putative vacuolar cation/proton exchanger 4, found in Oryza sativa subsp. japonica (Rice).